Consider the following 192-residue polypeptide: Adenylate kinase (192 aa).

10–15 provides a ligand contact to ATP; the sequence is GAGKGT. Residues 30-59 form an NMP region; it reads STGDMLRAAVAQATEVGKRAKAVMDAGQLV. AMP is bound by residues T31, R36, 57–59, 85–88, and Q92; these read QLV and GYPR. The LID stretch occupies residues 126–142; it reads NRVAETVAAGGTVRSDD. R127 contacts ATP. AMP contacts are provided by R139 and R150. A178 lines the ATP pocket.

Belongs to the adenylate kinase family. In terms of assembly, monomer.

It is found in the cytoplasm. The enzyme catalyses AMP + ATP = 2 ADP. It functions in the pathway purine metabolism; AMP biosynthesis via salvage pathway; AMP from ADP: step 1/1. In terms of biological role, catalyzes the reversible transfer of the terminal phosphate group between ATP and AMP. Plays an important role in cellular energy homeostasis and in adenine nucleotide metabolism. The sequence is that of Adenylate kinase from Sinorhizobium medicae (strain WSM419) (Ensifer medicae).